The following is a 332-amino-acid chain: Biotin synthase (332 aa).

A Radical SAM core domain is found at 51-278 (RTIQLSTLMS…KSYVRLSAGR (228 aa)). 3 residues coordinate [4Fe-4S] cluster: C66, C70, and C73. [2Fe-2S] cluster is bound by residues C110, C141, C201, and R273.

The protein belongs to the radical SAM superfamily. Biotin synthase family. In terms of assembly, homodimer. [4Fe-4S] cluster is required as a cofactor. It depends on [2Fe-2S] cluster as a cofactor.

It catalyses the reaction (4R,5S)-dethiobiotin + (sulfur carrier)-SH + 2 reduced [2Fe-2S]-[ferredoxin] + 2 S-adenosyl-L-methionine = (sulfur carrier)-H + biotin + 2 5'-deoxyadenosine + 2 L-methionine + 2 oxidized [2Fe-2S]-[ferredoxin]. The protein operates within cofactor biosynthesis; biotin biosynthesis; biotin from 7,8-diaminononanoate: step 2/2. Its function is as follows. Catalyzes the conversion of dethiobiotin (DTB) to biotin by the insertion of a sulfur atom into dethiobiotin via a radical-based mechanism. In Haemophilus influenzae (strain PittGG), this protein is Biotin synthase.